Reading from the N-terminus, the 157-residue chain is Protein Smg homolog (157 aa).

Belongs to the Smg family.

This is Protein Smg homolog from Aliivibrio fischeri (strain MJ11) (Vibrio fischeri).